Reading from the N-terminus, the 328-residue chain is Sphingolipid delta(4)-desaturase DES1-like (328 aa).

3 consecutive transmembrane segments (helical) span residues 50–70 (PLAF…ATLL), 78–98 (ILTV…LAIH), and 114–134 (WLGI…FQKY). The short motif at 98-102 (HELSH) is the Histidine box-1 element. A Histidine box-2 motif is present at residues 135 to 139 (HLEHH). 3 consecutive transmembrane segments (helical) span residues 164 to 184 (LSKS…PLFL), 192 to 212 (WEFT…YFFG), and 217 to 237 (AYLI…GHFI). Positions 266–270 (HNEHH) match the Histidine box-3 motif.

This sequence belongs to the fatty acid desaturase type 1 family. DEGS subfamily.

Its subcellular location is the endoplasmic reticulum membrane. It carries out the reaction an N-acylsphinganine + 2 Fe(II)-[cytochrome b5] + O2 + 2 H(+) = an N-acylsphing-4-enine + 2 Fe(III)-[cytochrome b5] + 2 H2O. Its function is as follows. Sphingolipid-delta-4-desaturase required for the biosynthesis of delta-4-unsaturated sphingolipids and derivatives. The polypeptide is Sphingolipid delta(4)-desaturase DES1-like (Oryza sativa subsp. japonica (Rice)).